A 140-amino-acid polypeptide reads, in one-letter code: Large ribosomal subunit protein uL11 (140 aa).

It belongs to the universal ribosomal protein uL11 family. As to quaternary structure, part of the ribosomal stalk of the 50S ribosomal subunit. Interacts with L10 and the large rRNA to form the base of the stalk. L10 forms an elongated spine to which L12 dimers bind in a sequential fashion forming a multimeric L10(L12)X complex. Post-translationally, one or more lysine residues are methylated.

Functionally, forms part of the ribosomal stalk which helps the ribosome interact with GTP-bound translation factors. The chain is Large ribosomal subunit protein uL11 from Syntrophobacter fumaroxidans (strain DSM 10017 / MPOB).